Reading from the N-terminus, the 216-residue chain is MENQLLVRRLGRQDYTPVWQAMHQFTDQRDSTTRDEVWLVEHNPVFTQGQAGKAEHLLNTGDIPVVQSDRGGQVTYHGPGQLVAYFLIDLRRKKLGVRELVTHIENLVIHTLKHYQIESAARPDAPGVYVQNRKICSLGLRIRKGCSFHGLALNIQMDLAPFLRINPCGYAGMEMIQLSDLHPVSMEQVEKVLIQELVTLLDYEQVEFSTEAYNHE.

In terms of domain architecture, BPL/LPL catalytic spans 31-205 (STTRDEVWLV…ELVTLLDYEQ (175 aa)). Residues 70–77 (RGGQVTYH), 137–139 (SLG), and 150–152 (GLA) each bind substrate. The Acyl-thioester intermediate role is filled by Cys-168.

The protein belongs to the LipB family.

It is found in the cytoplasm. The enzyme catalyses octanoyl-[ACP] + L-lysyl-[protein] = N(6)-octanoyl-L-lysyl-[protein] + holo-[ACP] + H(+). Its pathway is protein modification; protein lipoylation via endogenous pathway; protein N(6)-(lipoyl)lysine from octanoyl-[acyl-carrier-protein]: step 1/2. Catalyzes the transfer of endogenously produced octanoic acid from octanoyl-acyl-carrier-protein onto the lipoyl domains of lipoate-dependent enzymes. Lipoyl-ACP can also act as a substrate although octanoyl-ACP is likely to be the physiological substrate. The chain is Octanoyltransferase from Vibrio cholerae serotype O1 (strain ATCC 39541 / Classical Ogawa 395 / O395).